Here is a 77-residue protein sequence, read N- to C-terminus: Conotoxin PnMKLT1-0122 (77 aa).

The signal sequence occupies residues 1 to 22 (MKLTCMMIVAVLFLTAWTFATA). A propeptide spanning residues 23–49 (EDPRNGLENLFSKAHHEMKNPEDSKLN) is cleaved from the precursor. Intrachain disulfides connect Cys-52-Cys-67, Cys-59-Cys-71, and Cys-66-Cys-76.

This sequence belongs to the conotoxin O1 superfamily. Expressed by the venom duct.

It is found in the secreted. The polypeptide is Conotoxin PnMKLT1-0122 (Conus pennaceus (Feathered cone)).